Here is a 459-residue protein sequence, read N- to C-terminus: tRNA modification GTPase MnmE (459 aa).

Residues Arg-23, Glu-85, and Arg-124 each contribute to the (6S)-5-formyl-5,6,7,8-tetrahydrofolate site. The TrmE-type G domain maps to 221 to 380; it reads GLSTAIIGRP…LEKAIADTFF (160 aa). Asn-231 lines the K(+) pocket. GTP contacts are provided by residues 231–236, 250–256, and 275–278; these read NVGKSS, TEIPGTT, and DTAG. Residue Ser-235 participates in Mg(2+) binding. 3 residues coordinate K(+): Thr-250, Ile-252, and Thr-255. Thr-256 contacts Mg(2+). Residue Lys-459 participates in (6S)-5-formyl-5,6,7,8-tetrahydrofolate binding.

This sequence belongs to the TRAFAC class TrmE-Era-EngA-EngB-Septin-like GTPase superfamily. TrmE GTPase family. In terms of assembly, homodimer. Heterotetramer of two MnmE and two MnmG subunits. It depends on K(+) as a cofactor.

The protein localises to the cytoplasm. Functionally, exhibits a very high intrinsic GTPase hydrolysis rate. Involved in the addition of a carboxymethylaminomethyl (cmnm) group at the wobble position (U34) of certain tRNAs, forming tRNA-cmnm(5)s(2)U34. The chain is tRNA modification GTPase MnmE from Oceanobacillus iheyensis (strain DSM 14371 / CIP 107618 / JCM 11309 / KCTC 3954 / HTE831).